The following is a 186-amino-acid chain: Guanylate kinase (186 aa).

Positions 5–183 (GNLTVLTGPS…AFKEIEGFMG (179 aa)) constitute a Guanylate kinase-like domain. Position 12 to 19 (12 to 19 (GPSGVGKG)) interacts with ATP.

This sequence belongs to the guanylate kinase family.

Its subcellular location is the cytoplasm. It carries out the reaction GMP + ATP = GDP + ADP. Essential for recycling GMP and indirectly, cGMP. This is Guanylate kinase from Prochlorococcus marinus (strain NATL2A).